The sequence spans 462 residues: Probable protein phosphatase 2C 1 (462 aa).

One can recognise a PPM-type phosphatase domain in the interval 60–362 (SSCIFTQQGR…DDCAVVCLFL (303 aa)). The Mn(2+) site is built by aspartate 95, glycine 96, aspartate 307, and aspartate 353. Disordered stretches follow at residues 369-394 (ETSDNEEQCFSSATNAVESDESQGAE) and 421-443 (EADNAEKEKTREGEQNWSGLEGV). Polar residues predominate over residues 376–385 (QCFSSATNAV). Over residues 424–434 (NAEKEKTREGE) the composition is skewed to basic and acidic residues.

Belongs to the PP2C family. In terms of assembly, interacts with GCN5. It depends on Mg(2+) as a cofactor. The cofactor is Mn(2+).

It catalyses the reaction O-phospho-L-seryl-[protein] + H2O = L-seryl-[protein] + phosphate. The catalysed reaction is O-phospho-L-threonyl-[protein] + H2O = L-threonyl-[protein] + phosphate. Functionally, may act as negative regulator of GCN5. This chain is Probable protein phosphatase 2C 1 (PPC6-6), found in Arabidopsis thaliana (Mouse-ear cress).